The primary structure comprises 123 residues: MALLKISVVVPEGEVYTGEVKSVVLPGVEGEFGVLYGHSNMITLLQAGVVEIETENQKEHIAINWGYAEVTKERVDILADGAVFIKKESDDRDDAISRAKKLLEDASSDRLAVSSVLAKIESL.

The protein belongs to the ATPase epsilon chain family. As to quaternary structure, F-type ATPases have 2 components, CF(1) - the catalytic core - and CF(0) - the membrane proton channel. CF(1) has five subunits: alpha(3), beta(3), gamma(1), delta(1), epsilon(1). CF(0) has three main subunits: a, b and c.

The protein localises to the cell inner membrane. Functionally, produces ATP from ADP in the presence of a proton gradient across the membrane. In Helicobacter pylori (strain HPAG1), this protein is ATP synthase epsilon chain.